Consider the following 469-residue polypeptide: 3-isopropylmalate dehydratase large subunit (469 aa).

The [4Fe-4S] cluster site is built by Cys-349, Cys-410, and Cys-413.

Belongs to the aconitase/IPM isomerase family. LeuC type 1 subfamily. Heterodimer of LeuC and LeuD. [4Fe-4S] cluster is required as a cofactor.

The enzyme catalyses (2R,3S)-3-isopropylmalate = (2S)-2-isopropylmalate. It participates in amino-acid biosynthesis; L-leucine biosynthesis; L-leucine from 3-methyl-2-oxobutanoate: step 2/4. In terms of biological role, catalyzes the isomerization between 2-isopropylmalate and 3-isopropylmalate, via the formation of 2-isopropylmaleate. The polypeptide is 3-isopropylmalate dehydratase large subunit (Neisseria gonorrhoeae (strain NCCP11945)).